We begin with the raw amino-acid sequence, 239 residues long: tRNA (guanine-N(7)-)-methyltransferase (239 aa).

Positions 69, 94, 121, and 144 each coordinate S-adenosyl-L-methionine. D144 is an active-site residue. Residues K148, D180, and 217–220 contribute to the substrate site; that span reads TKFE.

It belongs to the class I-like SAM-binding methyltransferase superfamily. TrmB family.

It catalyses the reaction guanosine(46) in tRNA + S-adenosyl-L-methionine = N(7)-methylguanosine(46) in tRNA + S-adenosyl-L-homocysteine. It participates in tRNA modification; N(7)-methylguanine-tRNA biosynthesis. In terms of biological role, catalyzes the formation of N(7)-methylguanine at position 46 (m7G46) in tRNA. The chain is tRNA (guanine-N(7)-)-methyltransferase from Pseudoalteromonas atlantica (strain T6c / ATCC BAA-1087).